The chain runs to 279 residues: Serine protease 29 (279 aa).

An N-terminal signal peptide occupies residues 1 to 17; sequence MLIQLCLTLFFLGCSIA. The Peptidase S1 domain occupies 31 to 276; sequence IVGGHSAPQG…FLPWITQQMQ (246 aa). Cys62 and Cys78 form a disulfide bridge. Active-site charge relay system residues include His77 and Asp124. Cystine bridges form between Cys158–Cys234, Cys191–Cys215, and Cys224–Cys252. Asn197 carries N-linked (GlcNAc...) asparagine glycosylation. Residue Ser228 is the Charge relay system of the active site. Residue Asn235 is glycosylated (N-linked (GlcNAc...) asparagine).

It belongs to the peptidase S1 family. Homooligomer, heterodimer and heterotetramer. Able to form homo- and hetero- tetrameric structures. Heterotetramer is far more stable than the homotetramer. As to expression, expressed in embryos and placenta. Found in uterus especially in glandular epithelium during zona lysis and implantation.

It localises to the secreted. Involved in embryo hatching and implantation. This chain is Serine protease 29 (Prss29), found in Mus musculus (Mouse).